The following is a 299-amino-acid chain: Oxygen-dependent coproporphyrinogen-III oxidase (299 aa).

A substrate-binding site is contributed by serine 92. 2 residues coordinate a divalent metal cation: histidine 96 and histidine 106. Histidine 106 functions as the Proton donor in the catalytic mechanism. Position 108 to 110 (108 to 110 (NVR)) interacts with substrate. A divalent metal cation-binding residues include histidine 145 and histidine 175. The segment at 240–275 (YVEFNLVWDRGTLFGLQTGGRTESILMSMPPLVRWE) is important for dimerization. 258 to 260 (GGR) contacts substrate.

Belongs to the aerobic coproporphyrinogen-III oxidase family. In terms of assembly, homodimer. Requires a divalent metal cation as cofactor.

Its subcellular location is the cytoplasm. The catalysed reaction is coproporphyrinogen III + O2 + 2 H(+) = protoporphyrinogen IX + 2 CO2 + 2 H2O. Its pathway is porphyrin-containing compound metabolism; protoporphyrin-IX biosynthesis; protoporphyrinogen-IX from coproporphyrinogen-III (O2 route): step 1/1. Its function is as follows. Involved in the heme biosynthesis. Catalyzes the aerobic oxidative decarboxylation of propionate groups of rings A and B of coproporphyrinogen-III to yield the vinyl groups in protoporphyrinogen-IX. The chain is Oxygen-dependent coproporphyrinogen-III oxidase from Salmonella dublin (strain CT_02021853).